We begin with the raw amino-acid sequence, 83 residues long: Homeobox protein DLX-2 (83 aa).

Polar residues predominate over residues 1-14 (STATDSSYYTNQQH). 2 disordered regions span residues 1–27 (STAT…SPYA) and 63–83 (PYGT…LEPE).

This sequence belongs to the distal-less homeobox family. In terms of assembly, interacts (via homeobox DNA-binding domain) with POU4F2; this interaction enhances retinal ganglion cell (RGC) differentiation.

It is found in the nucleus. In terms of biological role, acts as a transcriptional activator. Activates transcription of CGA/alpha-GSU, via binding to the downstream activin regulatory element (DARE) in the gene promoter. Plays a role in terminal differentiation of interneurons, such as amacrine and bipolar cells in the developing retina. Likely to play a regulatory role in the development of the ventral forebrain. May play a role in craniofacial patterning and morphogenesis. In Rattus norvegicus (Rat), this protein is Homeobox protein DLX-2 (Dlx2).